An 89-amino-acid chain; its full sequence is Neuropeptide S (89 aa).

A signal peptide spans 1 to 23 (MIGSLKLSFVLALSLSVMHVLWC). Positions 24–69 (YPVLSSKVPGKPDYFLILLSSCPARLEGSDRLAFLKPILEKTSMKR) are excised as a propeptide.

Its subcellular location is the secreted. Functionally, may play an important anorexigenic role. Modulates arousal and anxiety as well as increases locomotor activity. Binds to its receptor NPSR1 with nanomolar affinity to increase intracellular calcium concentrations. This chain is Neuropeptide S (Nps), found in Mus musculus (Mouse).